We begin with the raw amino-acid sequence, 419 residues long: UDP-N-acetylglucosamine 1-carboxyvinyltransferase (419 aa).

Phosphoenolpyruvate is bound at residue 22–23; it reads KN. Position 95 (Arg-95) interacts with UDP-N-acetyl-alpha-D-glucosamine. Catalysis depends on Cys-119, which acts as the Proton donor. The residue at position 119 (Cys-119) is a 2-(S-cysteinyl)pyruvic acid O-phosphothioketal. UDP-N-acetyl-alpha-D-glucosamine-binding positions include 164–167, Asp-308, and Ile-330; that span reads KVSV.

This sequence belongs to the EPSP synthase family. MurA subfamily.

It localises to the cytoplasm. The catalysed reaction is phosphoenolpyruvate + UDP-N-acetyl-alpha-D-glucosamine = UDP-N-acetyl-3-O-(1-carboxyvinyl)-alpha-D-glucosamine + phosphate. It participates in cell wall biogenesis; peptidoglycan biosynthesis. Cell wall formation. Adds enolpyruvyl to UDP-N-acetylglucosamine. The protein is UDP-N-acetylglucosamine 1-carboxyvinyltransferase of Rickettsia felis (strain ATCC VR-1525 / URRWXCal2) (Rickettsia azadi).